The chain runs to 150 residues: Large ribosomal subunit protein bL9 (150 aa).

Belongs to the bacterial ribosomal protein bL9 family.

In terms of biological role, binds to the 23S rRNA. In Colwellia psychrerythraea (strain 34H / ATCC BAA-681) (Vibrio psychroerythus), this protein is Large ribosomal subunit protein bL9.